Here is a 522-residue protein sequence, read N- to C-terminus: ARS-binding protein 1 (522 aa).

Residues 70 to 144 (DVKRNRPPKY…RKRHILHAIN (75 aa)) enclose the HTH CENPB-type domain. Phosphothreonine is present on Thr-460.

In terms of assembly, interacts with mcm10.

Its subcellular location is the nucleus. In terms of biological role, binds, preferentially, to the Maundrell ARS consensus sequence within ARS3002. The chain is ARS-binding protein 1 (abp1) from Schizosaccharomyces pombe (strain 972 / ATCC 24843) (Fission yeast).